Reading from the N-terminus, the 473-residue chain is Ribulose bisphosphate carboxylase large chain (473 aa).

The propeptide occupies 1–2; that stretch reads MS. N123 and T173 together coordinate substrate. K175 acts as the Proton acceptor in catalysis. K177 is a binding site for substrate. 3 residues coordinate Mg(2+): K201, D203, and E204. The residue at position 201 (K201) is an N6-carboxylysine. At S208 the chain carries Phosphoserine. Catalysis depends on H294, which acts as the Proton acceptor. Residues R295 and H327 each coordinate substrate. T330 is modified (phosphothreonine). S379 provides a ligand contact to substrate.

This sequence belongs to the RuBisCO large chain family. Type I subfamily. In terms of assembly, heterohexadecamer of 8 large chains and 8 small chains; disulfide-linked. The disulfide link is formed within the large subunit homodimers. Mg(2+) is required as a cofactor. Post-translationally, the disulfide bond which can form in the large chain dimeric partners within the hexadecamer appears to be associated with oxidative stress and protein turnover.

Its subcellular location is the plastid. The protein localises to the chloroplast. It carries out the reaction 2 (2R)-3-phosphoglycerate + 2 H(+) = D-ribulose 1,5-bisphosphate + CO2 + H2O. The catalysed reaction is D-ribulose 1,5-bisphosphate + O2 = 2-phosphoglycolate + (2R)-3-phosphoglycerate + 2 H(+). RuBisCO catalyzes two reactions: the carboxylation of D-ribulose 1,5-bisphosphate, the primary event in carbon dioxide fixation, as well as the oxidative fragmentation of the pentose substrate in the photorespiration process. Both reactions occur simultaneously and in competition at the same active site. This chain is Ribulose bisphosphate carboxylase large chain, found in Sinapis alba (White mustard).